The sequence spans 374 residues: Peptidoglycan recognition protein 4 (374 aa).

The N-terminal stretch at 1–20 (MLSWLLVFSILVLLAQGVSS) is a signal peptide. N-linked (GlcNAc...) asparagine glycosylation is found at asparagine 39, asparagine 93, and asparagine 146. N-acetylmuramoyl-L-alanine amidase domains lie at 76-212 (RPVD…KACP) and 233-359 (PAKY…LSPG). Cystine bridges form between cysteine 211–cysteine 333, cysteine 227–cysteine 271, and cysteine 247–cysteine 253. Tyrosine 275 provides a ligand contact to peptidoglycan. Interaction with murein stretches follow at residues 294–303 (QGSKTDSYND) and 354–355 (NT).

It belongs to the N-acetylmuramoyl-L-alanine amidase 2 family. Homodimer; disulfide-linked. Heterodimer with PGLYRP3; disulfide-linked. Ubiquitous.

The protein localises to the secreted. Pattern receptor that binds to murein peptidoglycans (PGN) of Gram-positive bacteria. Has bactericidal activity towards Gram-positive bacteria. May kill Gram-positive bacteria by interfering with peptidoglycan biosynthesis. Also binds to Gram-negative bacteria, and has bacteriostatic activity towards Gram-negative bacteria. Plays a role in innate immunity. The sequence is that of Peptidoglycan recognition protein 4 (Pglyrp4) from Mus musculus (Mouse).